The following is a 230-amino-acid chain: Proteasome subunit beta 2 (230 aa).

Residues methionine 1–aspartate 10 are compositionally biased toward basic and acidic residues. The segment at methionine 1–glutamate 29 is disordered. A propeptide spans methionine 1–glycine 35 (removed in mature form; by autocatalysis). The active-site Nucleophile is threonine 36.

The protein belongs to the peptidase T1B family. The 20S proteasome core is composed of 14 alpha and 14 beta subunits that assemble into four stacked heptameric rings, resulting in a barrel-shaped structure. The two inner rings, each composed of seven catalytic beta subunits, are sandwiched by two outer rings, each composed of seven alpha subunits. The catalytic chamber with the active sites is on the inside of the barrel. Has a gated structure, the ends of the cylinder being occluded by the N-termini of the alpha-subunits. Is capped at one or both ends by the proteasome regulatory ATPase, PAN.

The protein resides in the cytoplasm. It carries out the reaction Cleavage of peptide bonds with very broad specificity.. The formation of the proteasomal ATPase PAN-20S proteasome complex, via the docking of the C-termini of PAN into the intersubunit pockets in the alpha-rings, triggers opening of the gate for substrate entry. Interconversion between the open-gate and close-gate conformations leads to a dynamic regulation of the 20S proteasome proteolysis activity. Component of the proteasome core, a large protease complex with broad specificity involved in protein degradation. This chain is Proteasome subunit beta 2, found in Haloarcula marismortui (strain ATCC 43049 / DSM 3752 / JCM 8966 / VKM B-1809) (Halobacterium marismortui).